The primary structure comprises 956 residues: Replication factor C subunit 1 (956 aa).

2 stretches are compositionally biased toward basic and acidic residues: residues 1–15 and 50–74; these read MSDI…HEKG and TADR…KEVE. Disordered regions lie at residues 1–206 and 286–332; these read MSDI…TPDC and KKSL…AKGK. Residues 158 to 183 are compositionally biased toward gly residues; sequence RGRGGRAAPGASTGGRGRGGGRGGFM. Basic and acidic residues-rich tracts occupy residues 186–200 and 288–298; these read GERK…KEVP and SLPERSNKGTE. A BRCT domain is found at 202–292; that stretch reads GTPDCLAGLT…KPVKKSLPER (91 aa). 399 to 406 is a binding site for ATP; that stretch reads SGTPGIGK. Positions 858–956 are disordered; sequence LEPTVDSLRD…GRGSGAKRKR (99 aa). Residues 866–892 are compositionally biased toward acidic residues; that stretch reads RDEDGEPLADNEEGNGSDAEEDSEEAT. Residues 916 to 925 show a composition bias toward low complexity; the sequence is KGAGSSGSRK.

Belongs to the activator 1 large subunit family. In terms of assembly, heterotetramer of subunits RFC2, RFC3, RFC4 and RFC5 that can form a complex with RFC1. Expressed at high levels in flowers and siliques, and at lower levels in roots, stems and leaves.

The protein resides in the nucleus. Functionally, plays a role as mediator of transcriptional gene silencing (TGS), DNA replication, DNA repair, hypersensitive response (HR) and telomere length regulation. Is required in meiosis for DNA double-strand break (DSB) repair during meiotic homologous recombination. May participate in the RAD51-mediated recombination intermediate repair process. Is important for lagging strand synthesis. Promotes meiotic recombination via a specific pathway for crossovers (COs) that involves the formation of double Holliday Junction (dHJ) intermediates. In Arabidopsis thaliana (Mouse-ear cress), this protein is Replication factor C subunit 1 (RFC1).